A 192-amino-acid polypeptide reads, in one-letter code: Signal peptidase complex catalytic subunit SEC11C (192 aa).

The Cytoplasmic portion of the chain corresponds to Met1–Arg28. A helical; Signal-anchor for type II membrane protein transmembrane segment spans residues Gln29–Trp48. The Lumenal portion of the chain corresponds to Lys49–Ser192. Catalysis depends on charge relay system residues Ser68, His108, and Asp134. Residues Ala177–Leu188 are C-terminal short (CTS) helix.

It belongs to the peptidase S26B family. Component of the signal peptidase complex paralog C (SPC-C) composed of a catalytic subunit SEC11C and three accessory subunits SPCS1, SPCS2 and SPCS3. Within the complex, interacts with SPCS2 and SPCS3. The complex induces a local thinning of the ER membrane which is used to measure the length of the signal peptide (SP) h-region of protein substrates. This ensures the selectivity of the complex towards h-regions shorter than 18-20 amino acids. May undergo processing at the N-terminus.

The protein localises to the endoplasmic reticulum membrane. The catalysed reaction is Cleavage of hydrophobic, N-terminal signal or leader sequences from secreted and periplasmic proteins.. Its function is as follows. Catalytic component of the signal peptidase complex (SPC) which catalyzes the cleavage of N-terminal signal sequences from nascent proteins as they are translocated into the lumen of the endoplasmic reticulum. Specifically cleaves N-terminal signal peptides that contain a hydrophobic alpha-helix (h-region) shorter than 18-20 amino acids. The protein is Signal peptidase complex catalytic subunit SEC11C (SEC11C) of Homo sapiens (Human).